The following is an 83-amino-acid chain: Small ribosomal subunit protein uS17 (83 aa).

This sequence belongs to the universal ribosomal protein uS17 family. Part of the 30S ribosomal subunit.

Its function is as follows. One of the primary rRNA binding proteins, it binds specifically to the 5'-end of 16S ribosomal RNA. The sequence is that of Small ribosomal subunit protein uS17 from Chlamydia muridarum (strain MoPn / Nigg).